The following is a 129-amino-acid chain: Glycine cleavage system H protein (129 aa).

The region spanning 24-106 is the Lipoyl-binding domain; that stretch reads LIRVGISAFA…HGAGWLLVVR (83 aa). Lys65 carries the N6-lipoyllysine modification.

This sequence belongs to the GcvH family. In terms of assembly, the glycine cleavage system is composed of four proteins: P, T, L and H. (R)-lipoate serves as cofactor.

Functionally, the glycine cleavage system catalyzes the degradation of glycine. The H protein shuttles the methylamine group of glycine from the P protein to the T protein. The protein is Glycine cleavage system H protein of Synechococcus sp. (strain CC9902).